The following is a 201-amino-acid chain: Recombination protein RecR (201 aa).

The C4-type zinc-finger motif lies at C60–C75. The region spanning G83–P178 is the Toprim domain.

It belongs to the RecR family.

In terms of biological role, may play a role in DNA repair. It seems to be involved in an RecBC-independent recombinational process of DNA repair. It may act with RecF and RecO. This chain is Recombination protein RecR, found in Syntrophobacter fumaroxidans (strain DSM 10017 / MPOB).